Here is a 219-residue protein sequence, read N- to C-terminus: Large ribosomal subunit protein uL4 (219 aa).

Residues 45–103 (ARRQGTHATKTRGQVRGGGRKPYRQKGTGRARQGSIRAPQFTGGGTVHGPQPRDYDQRT) form a disordered region. Over residues 62 to 73 (GGRKPYRQKGTG) the composition is skewed to basic residues.

The protein belongs to the universal ribosomal protein uL4 family. In terms of assembly, part of the 50S ribosomal subunit.

One of the primary rRNA binding proteins, this protein initially binds near the 5'-end of the 23S rRNA. It is important during the early stages of 50S assembly. It makes multiple contacts with different domains of the 23S rRNA in the assembled 50S subunit and ribosome. In terms of biological role, forms part of the polypeptide exit tunnel. The protein is Large ribosomal subunit protein uL4 of Corynebacterium kroppenstedtii (strain DSM 44385 / JCM 11950 / CIP 105744 / CCUG 35717).